The primary structure comprises 572 residues: DNA mismatch repair protein MutL (572 aa).

This sequence belongs to the DNA mismatch repair MutL/HexB family.

This protein is involved in the repair of mismatches in DNA. It is required for dam-dependent methyl-directed DNA mismatch repair. May act as a 'molecular matchmaker', a protein that promotes the formation of a stable complex between two or more DNA-binding proteins in an ATP-dependent manner without itself being part of a final effector complex. The sequence is that of DNA mismatch repair protein MutL from Dictyoglomus turgidum (strain DSM 6724 / Z-1310).